The primary structure comprises 492 residues: Ketol-acid reductoisomerase (NADP(+)) (492 aa).

In terms of domain architecture, KARI N-terminal Rossmann spans 15–208; the sequence is AQLGKCRFMA…GAHRAGVLES (194 aa). NADP(+) contacts are provided by residues 45–48, Arg68, Arg76, Ser78, and 108–110; these read CGAQ and DKQ. His132 is an active-site residue. Gly158 is a binding site for NADP(+). KARI C-terminal knotted domains lie at 209–344 and 345–485; these read SFVA…NSPE and YDGK…MTDM. Mg(2+) contacts are provided by Asp217, Glu221, Glu389, and Glu393. Residue Ser414 coordinates substrate.

Belongs to the ketol-acid reductoisomerase family. Requires Mg(2+) as cofactor.

It carries out the reaction (2R)-2,3-dihydroxy-3-methylbutanoate + NADP(+) = (2S)-2-acetolactate + NADPH + H(+). The enzyme catalyses (2R,3R)-2,3-dihydroxy-3-methylpentanoate + NADP(+) = (S)-2-ethyl-2-hydroxy-3-oxobutanoate + NADPH + H(+). Its pathway is amino-acid biosynthesis; L-isoleucine biosynthesis; L-isoleucine from 2-oxobutanoate: step 2/4. The protein operates within amino-acid biosynthesis; L-valine biosynthesis; L-valine from pyruvate: step 2/4. Functionally, involved in the biosynthesis of branched-chain amino acids (BCAA). Catalyzes an alkyl-migration followed by a ketol-acid reduction of (S)-2-acetolactate (S2AL) to yield (R)-2,3-dihydroxy-isovalerate. In the isomerase reaction, S2AL is rearranged via a Mg-dependent methyl migration to produce 3-hydroxy-3-methyl-2-ketobutyrate (HMKB). In the reductase reaction, this 2-ketoacid undergoes a metal-dependent reduction by NADPH to yield (R)-2,3-dihydroxy-isovalerate. This chain is Ketol-acid reductoisomerase (NADP(+)), found in Photorhabdus laumondii subsp. laumondii (strain DSM 15139 / CIP 105565 / TT01) (Photorhabdus luminescens subsp. laumondii).